A 368-amino-acid chain; its full sequence is Probable dual-specificity RNA methyltransferase RlmN (368 aa).

The active-site Proton acceptor is glutamate 109. Residues tyrosine 115–glutamate 355 form the Radical SAM core domain. Cysteines 122 and 360 form a disulfide. [4Fe-4S] cluster is bound by residues cysteine 129, cysteine 133, and cysteine 136. Residues glycine 184–glutamate 185, serine 218, serine 241–histidine 243, and asparagine 317 contribute to the S-adenosyl-L-methionine site. The active-site S-methylcysteine intermediate is cysteine 360.

This sequence belongs to the radical SAM superfamily. RlmN family. Requires [4Fe-4S] cluster as cofactor.

It localises to the cytoplasm. It catalyses the reaction adenosine(2503) in 23S rRNA + 2 reduced [2Fe-2S]-[ferredoxin] + 2 S-adenosyl-L-methionine = 2-methyladenosine(2503) in 23S rRNA + 5'-deoxyadenosine + L-methionine + 2 oxidized [2Fe-2S]-[ferredoxin] + S-adenosyl-L-homocysteine. It carries out the reaction adenosine(37) in tRNA + 2 reduced [2Fe-2S]-[ferredoxin] + 2 S-adenosyl-L-methionine = 2-methyladenosine(37) in tRNA + 5'-deoxyadenosine + L-methionine + 2 oxidized [2Fe-2S]-[ferredoxin] + S-adenosyl-L-homocysteine. Specifically methylates position 2 of adenine 2503 in 23S rRNA and position 2 of adenine 37 in tRNAs. In Streptomyces coelicolor (strain ATCC BAA-471 / A3(2) / M145), this protein is Probable dual-specificity RNA methyltransferase RlmN.